Here is a 270-residue protein sequence, read N- to C-terminus: Phosphatidate cytidylyltransferase (270 aa).

The next 7 helical transmembrane spans lie at 19–39 (LWLT…IGLA), 53–73 (TAFS…LLIL), 76–96 (GALL…VTQW), 101–121 (GWPA…SLLR), 126–146 (FGFT…ITAY), 183–203 (LVAS…ALLL), and 248–268 (ALLY…AIFF).

It belongs to the CDS family.

The protein resides in the cell inner membrane. The catalysed reaction is a 1,2-diacyl-sn-glycero-3-phosphate + CTP + H(+) = a CDP-1,2-diacyl-sn-glycerol + diphosphate. It participates in phospholipid metabolism; CDP-diacylglycerol biosynthesis; CDP-diacylglycerol from sn-glycerol 3-phosphate: step 3/3. The sequence is that of Phosphatidate cytidylyltransferase (cdsA) from Brucella abortus (strain 2308).